A 191-amino-acid chain; its full sequence is MQECGLVATDIACRRGDRILFRALSLDVKAGEIVHLAGANGIGKSSLIRILAGLLRPFAGTVERRGAIALSDERLALDGHLPLEDALRFWDRIDRAGRPEAEFGLDDLLDVPVRYLSTGQRKRAALARVAASGAPLWLLDEPLNGLDVHWSERAQEAIEAHCARGGAVVIASHQPLALERVRTLAIRNFQP.

Residues 6–189 (LVATDIACRR…RVRTLAIRNF (184 aa)) enclose the ABC transporter domain. Position 38–45 (38–45 (GANGIGKS)) interacts with ATP.

Belongs to the ABC transporter superfamily. CcmA exporter (TC 3.A.1.107) family. In terms of assembly, the complex is composed of two ATP-binding proteins (CcmA) and two transmembrane proteins (CcmB).

It localises to the cell inner membrane. It catalyses the reaction heme b(in) + ATP + H2O = heme b(out) + ADP + phosphate + H(+). Its function is as follows. Part of the ABC transporter complex CcmAB involved in the biogenesis of c-type cytochromes; once thought to export heme, this seems not to be the case, but its exact role is uncertain. Responsible for energy coupling to the transport system. The polypeptide is Cytochrome c biogenesis ATP-binding export protein CcmA (Novosphingobium aromaticivorans (strain ATCC 700278 / DSM 12444 / CCUG 56034 / CIP 105152 / NBRC 16084 / F199)).